A 127-amino-acid polypeptide reads, in one-letter code: Auxin-responsive protein SAUR76 (127 aa).

Residues 20 to 40 (SFNTKPNQPPAQTNHSRSSAV) are disordered.

It belongs to the ARG7 family. Expressed in cotyledons, hypocotyls and roots of young seedlings. Expressed in emerging lateral root, leaves, flowers, stamens and filaments.

Its subcellular location is the nucleus. The protein localises to the cytoplasm. It is found in the cell membrane. Its function is as follows. May be involved in the regulation of ethylene receptor signaling. Promotes cell expansion and plant growth. Involved in the regulation of cell elongation. The protein is Auxin-responsive protein SAUR76 of Arabidopsis thaliana (Mouse-ear cress).